The sequence spans 133 residues: Phosphoribosyl-ATP pyrophosphatase (133 aa).

A disordered region spans residues 1–22 (MGKPATKPAPKPSKQQDDKKSD).

This sequence belongs to the PRA-PH family.

Its subcellular location is the cytoplasm. The catalysed reaction is 1-(5-phospho-beta-D-ribosyl)-ATP + H2O = 1-(5-phospho-beta-D-ribosyl)-5'-AMP + diphosphate + H(+). It participates in amino-acid biosynthesis; L-histidine biosynthesis; L-histidine from 5-phospho-alpha-D-ribose 1-diphosphate: step 2/9. This Gluconobacter oxydans (strain 621H) (Gluconobacter suboxydans) protein is Phosphoribosyl-ATP pyrophosphatase.